The chain runs to 80 residues: Turripeptide VI/VII-01 (80 aa).

A signal peptide spans 1–22; that stretch reads MRLQLILTITLLLTSFMGYRDA. Positions 23-36 are excised as a propeptide; sequence AVIQGKTERSAMKM. Cystine bridges form between C48–C61, C50–C65, and C60–C70. The propeptide occupies 77–80; it reads SSAI.

As to expression, expressed by the venom duct.

The protein localises to the secreted. This Gemmula speciosa (Splendid gem-turris) protein is Turripeptide VI/VII-01.